The sequence spans 335 residues: Dihydroorotate dehydrogenase (quinone) (335 aa).

Residues 58-62 (AGADK) and Thr-82 each bind FMN. Lys-62 lines the substrate pocket. Position 107–111 (107–111 (NRNGF)) interacts with substrate. Residues Asn-135 and Asn-168 each coordinate FMN. Asn-168 provides a ligand contact to substrate. Ser-171 functions as the Nucleophile in the catalytic mechanism. A substrate-binding site is contributed by Asn-173. 2 residues coordinate FMN: Lys-213 and Gly-241. 242-243 (NT) is a substrate binding site. FMN contacts are provided by residues Gly-264, Gly-293, and 314–315 (YS).

The protein belongs to the dihydroorotate dehydrogenase family. Type 2 subfamily. Monomer. FMN serves as cofactor.

It localises to the cell membrane. It catalyses the reaction (S)-dihydroorotate + a quinone = orotate + a quinol. Its pathway is pyrimidine metabolism; UMP biosynthesis via de novo pathway; orotate from (S)-dihydroorotate (quinone route): step 1/1. Its function is as follows. Catalyzes the conversion of dihydroorotate to orotate with quinone as electron acceptor. This Actinobacillus pleuropneumoniae serotype 7 (strain AP76) protein is Dihydroorotate dehydrogenase (quinone).